A 226-amino-acid chain; its full sequence is uncharacterized protein (226 aa).

A helical transmembrane segment spans residues 203-225 (FGISDIYTSTLSFGLIISLFYLL).

The protein resides in the membrane. This is an uncharacterized protein from Acanthamoeba polyphaga (Amoeba).